A 326-amino-acid polypeptide reads, in one-letter code: Phospho-N-acetylmuramoyl-pentapeptide-transferase (326 aa).

Helical transmembrane passes span 13–33, 57–77, 85–105, 121–141, 155–175, 181–201, 208–228, 232–252, 257–277, and 305–325; these read ILAP…IFIP, GTPT…ILIM, EMIL…DDIL, MILL…NVGT, NLGI…TNAV, IDGL…IIGF, VAVF…FNAF, IFMG…IALM, LFVI…IIQV, and VKIV…GFVA.

Belongs to the glycosyltransferase 4 family. MraY subfamily. The cofactor is Mg(2+).

The protein localises to the cell membrane. It carries out the reaction UDP-N-acetyl-alpha-D-muramoyl-L-alanyl-gamma-D-glutamyl-meso-2,6-diaminopimeloyl-D-alanyl-D-alanine + di-trans,octa-cis-undecaprenyl phosphate = di-trans,octa-cis-undecaprenyl diphospho-N-acetyl-alpha-D-muramoyl-L-alanyl-D-glutamyl-meso-2,6-diaminopimeloyl-D-alanyl-D-alanine + UMP. The protein operates within cell wall biogenesis; peptidoglycan biosynthesis. In terms of biological role, catalyzes the initial step of the lipid cycle reactions in the biosynthesis of the cell wall peptidoglycan: transfers peptidoglycan precursor phospho-MurNAc-pentapeptide from UDP-MurNAc-pentapeptide onto the lipid carrier undecaprenyl phosphate, yielding undecaprenyl-pyrophosphoryl-MurNAc-pentapeptide, known as lipid I. This chain is Phospho-N-acetylmuramoyl-pentapeptide-transferase, found in Clostridium beijerinckii (strain ATCC 51743 / NCIMB 8052) (Clostridium acetobutylicum).